A 286-amino-acid chain; its full sequence is uncharacterized protein (286 aa).

The Integrase catalytic domain occupies 1 to 146 (MSRYKKDNDG…KPVDVERGDF (146 aa)). Residues 252 to 263 (RKVKAKKGKKDK) show a composition bias toward basic residues. The disordered stretch occupies residues 252-286 (RKVKAKKGKKDKKLKESKKSDDTSTGASTGSSIAM). Residues 264-273 (KLKESKKSDD) show a composition bias toward basic and acidic residues. Low complexity predominate over residues 274-286 (TSTGASTGSSIAM).

This is an uncharacterized protein from Caenorhabditis elegans.